A 189-amino-acid polypeptide reads, in one-letter code: Peptidyl-tRNA hydrolase (189 aa).

Tyr-14 provides a ligand contact to tRNA. Catalysis depends on His-19, which acts as the Proton acceptor. TRNA contacts are provided by Phe-64, Asn-66, and Asn-112.

This sequence belongs to the PTH family. As to quaternary structure, monomer.

It is found in the cytoplasm. The enzyme catalyses an N-acyl-L-alpha-aminoacyl-tRNA + H2O = an N-acyl-L-amino acid + a tRNA + H(+). Its function is as follows. Hydrolyzes ribosome-free peptidyl-tRNAs (with 1 or more amino acids incorporated), which drop off the ribosome during protein synthesis, or as a result of ribosome stalling. In terms of biological role, catalyzes the release of premature peptidyl moieties from peptidyl-tRNA molecules trapped in stalled 50S ribosomal subunits, and thus maintains levels of free tRNAs and 50S ribosomes. The chain is Peptidyl-tRNA hydrolase from Rhizorhabdus wittichii (strain DSM 6014 / CCUG 31198 / JCM 15750 / NBRC 105917 / EY 4224 / RW1) (Sphingomonas wittichii).